Here is a 60-residue protein sequence, read N- to C-terminus: Large ribosomal subunit protein bL32 (60 aa).

Basic residues predominate over residues 1–16 (MAVPRNRHSNARKNIR). Residues 1 to 20 (MAVPRNRHSNARKNIRRSHD) are disordered.

The protein belongs to the bacterial ribosomal protein bL32 family.

This is Large ribosomal subunit protein bL32 (rpmF) from Chlamydia pneumoniae (Chlamydophila pneumoniae).